A 379-amino-acid polypeptide reads, in one-letter code: Succinyl-diaminopimelate desuccinylase (379 aa).

Residue His70 coordinates Zn(2+). The active site involves Asp72. Residue Asp103 coordinates Zn(2+). Glu137 serves as the catalytic Proton acceptor. Positions 138, 166, and 352 each coordinate Zn(2+).

This sequence belongs to the peptidase M20A family. DapE subfamily. In terms of assembly, homodimer. It depends on Zn(2+) as a cofactor. Co(2+) is required as a cofactor.

It carries out the reaction N-succinyl-(2S,6S)-2,6-diaminopimelate + H2O = (2S,6S)-2,6-diaminopimelate + succinate. The protein operates within amino-acid biosynthesis; L-lysine biosynthesis via DAP pathway; LL-2,6-diaminopimelate from (S)-tetrahydrodipicolinate (succinylase route): step 3/3. Its function is as follows. Catalyzes the hydrolysis of N-succinyl-L,L-diaminopimelic acid (SDAP), forming succinate and LL-2,6-diaminopimelate (DAP), an intermediate involved in the bacterial biosynthesis of lysine and meso-diaminopimelic acid, an essential component of bacterial cell walls. This chain is Succinyl-diaminopimelate desuccinylase, found in Shewanella baltica (strain OS195).